A 147-amino-acid chain; its full sequence is uncharacterized protein (147 aa).

In terms of domain architecture, HTH marR-type spans 1-137 (MRDNTIGSLI…LYELMTKVHK (137 aa)). The segment at residues 53 to 76 (QMELAEKVTVTQGGISRMLTRLEK) is a DNA-binding region (H-T-H motif).

This is an uncharacterized protein from Bacillus cereus (strain ATCC 10987 / NRS 248).